The chain runs to 358 residues: Period circadian protein (358 aa).

2 PAS domains span residues 1-120 (GVVM…QTVP) and 138-240 (FIMR…YIIE).

In terms of assembly, forms a heterodimer with timeless (TIM); the complex then translocates into the nucleus. Post-translationally, phosphorylated with a circadian rhythmicity.

It localises to the nucleus. Involved in the generation of biological rhythms. The biological cycle depends on the rhythmic formation and nuclear localization of the tim-per complex. Light induces the degradation of tim, which promotes elimination of per. Nuclear activity of the heterodimer coordinatively regulates per and tim transcription negative feedback loop. Behaves as a negative element in circadian transcriptional loop. Does not appear to bind DNA, suggesting indirect transcriptional inhibition. The sequence is that of Period circadian protein (per) from Hyalophora cecropia (Cecropia moth).